Consider the following 262-residue polypeptide: Putative non-heme bromoperoxidase BpoC (262 aa).

Residues arginine 21, 87 to 88, and arginine 120 each bind substrate; that span reads SM. Residue serine 87 is part of the active site. Active-site residues include aspartate 211 and histidine 239. Residue histidine 239 participates in substrate binding.

This sequence belongs to the AB hydrolase superfamily. As to quaternary structure, homodimer.

This chain is Putative non-heme bromoperoxidase BpoC (bpoC), found in Mycobacterium tuberculosis (strain CDC 1551 / Oshkosh).